Here is a 395-residue protein sequence, read N- to C-terminus: Acetate kinase (395 aa).

Position 8 (Asn-8) interacts with Mg(2+). Residue Lys-15 coordinates ATP. Arg-89 provides a ligand contact to substrate. The Proton donor/acceptor role is filled by Asp-146. ATP is bound by residues 206 to 210 (HLGNG), 281 to 283 (DLR), and 329 to 333 (GIGEN). Glu-382 serves as a coordination point for Mg(2+).

This sequence belongs to the acetokinase family. In terms of assembly, homodimer. Requires Mg(2+) as cofactor. Mn(2+) serves as cofactor.

Its subcellular location is the cytoplasm. The enzyme catalyses acetate + ATP = acetyl phosphate + ADP. It functions in the pathway metabolic intermediate biosynthesis; acetyl-CoA biosynthesis; acetyl-CoA from acetate: step 1/2. Its function is as follows. Catalyzes the formation of acetyl phosphate from acetate and ATP. Can also catalyze the reverse reaction. The polypeptide is Acetate kinase (Shouchella clausii (strain KSM-K16) (Alkalihalobacillus clausii)).